The sequence spans 81 residues: Putative membrane protein insertion efficiency factor (81 aa).

Belongs to the UPF0161 family.

The protein resides in the cell inner membrane. Its function is as follows. Could be involved in insertion of integral membrane proteins into the membrane. The polypeptide is Putative membrane protein insertion efficiency factor (Pseudomonas syringae pv. syringae (strain B728a)).